The following is a 668-amino-acid chain: UvrABC system protein B (668 aa).

Residues 27–413 (AGVQAGHRFQ…STQVVEQIIR (387 aa)) enclose the Helicase ATP-binding domain. 40–47 (GATGTGKT) contacts ATP. Residues 93-116 (YYDYYQPEAYIPVTDTYIEKSASI) carry the Beta-hairpin motif. In terms of domain architecture, Helicase C-terminal spans 430–596 (QVDDLYGEIR…PIVKKTSNAI (167 aa)). Positions 628–663 (PPLIQDLEAKMKAAAQELAFEEAARYRDQIKRLRDR) constitute a UVR domain.

Belongs to the UvrB family. In terms of assembly, forms a heterotetramer with UvrA during the search for lesions. Interacts with UvrC in an incision complex.

The protein resides in the cytoplasm. The UvrABC repair system catalyzes the recognition and processing of DNA lesions. A damage recognition complex composed of 2 UvrA and 2 UvrB subunits scans DNA for abnormalities. Upon binding of the UvrA(2)B(2) complex to a putative damaged site, the DNA wraps around one UvrB monomer. DNA wrap is dependent on ATP binding by UvrB and probably causes local melting of the DNA helix, facilitating insertion of UvrB beta-hairpin between the DNA strands. Then UvrB probes one DNA strand for the presence of a lesion. If a lesion is found the UvrA subunits dissociate and the UvrB-DNA preincision complex is formed. This complex is subsequently bound by UvrC and the second UvrB is released. If no lesion is found, the DNA wraps around the other UvrB subunit that will check the other stand for damage. This chain is UvrABC system protein B, found in Thermosynechococcus vestitus (strain NIES-2133 / IAM M-273 / BP-1).